The primary structure comprises 128 residues: Large-conductance mechanosensitive channel (128 aa).

The next 2 helical transmembrane spans lie at 10–30 (FAMR…GAFG) and 76–96 (GLFI…FMMV).

It belongs to the MscL family. As to quaternary structure, homopentamer.

It localises to the cell inner membrane. In terms of biological role, channel that opens in response to stretch forces in the membrane lipid bilayer. May participate in the regulation of osmotic pressure changes within the cell. The protein is Large-conductance mechanosensitive channel of Mannheimia succiniciproducens (strain KCTC 0769BP / MBEL55E).